The chain runs to 474 residues: UDP-N-acetylmuramate--L-alanine ligase (474 aa).

Gly112–Thr118 provides a ligand contact to ATP.

Belongs to the MurCDEF family.

The protein localises to the cytoplasm. The enzyme catalyses UDP-N-acetyl-alpha-D-muramate + L-alanine + ATP = UDP-N-acetyl-alpha-D-muramoyl-L-alanine + ADP + phosphate + H(+). It functions in the pathway cell wall biogenesis; peptidoglycan biosynthesis. Functionally, cell wall formation. The protein is UDP-N-acetylmuramate--L-alanine ligase of Cupriavidus taiwanensis (strain DSM 17343 / BCRC 17206 / CCUG 44338 / CIP 107171 / LMG 19424 / R1) (Ralstonia taiwanensis (strain LMG 19424)).